A 112-amino-acid chain; its full sequence is Putative pterin-4-alpha-carbinolamine dehydratase (112 aa).

It belongs to the pterin-4-alpha-carbinolamine dehydratase family.

The catalysed reaction is (4aS,6R)-4a-hydroxy-L-erythro-5,6,7,8-tetrahydrobiopterin = (6R)-L-erythro-6,7-dihydrobiopterin + H2O. The polypeptide is Putative pterin-4-alpha-carbinolamine dehydratase (Photobacterium profundum (strain SS9)).